A 104-amino-acid polypeptide reads, in one-letter code: Large ribosomal subunit protein uL24 (104 aa).

It belongs to the universal ribosomal protein uL24 family. In terms of assembly, part of the 50S ribosomal subunit.

In terms of biological role, one of two assembly initiator proteins, it binds directly to the 5'-end of the 23S rRNA, where it nucleates assembly of the 50S subunit. One of the proteins that surrounds the polypeptide exit tunnel on the outside of the subunit. This Yersinia enterocolitica serotype O:8 / biotype 1B (strain NCTC 13174 / 8081) protein is Large ribosomal subunit protein uL24.